Here is a 279-residue protein sequence, read N- to C-terminus: Calcium-binding protein 4 (279 aa).

Residues 1–12 (MAEEQGRGRHGP) show a composition bias toward basic and acidic residues. A disordered region spans residues 1–114 (MAEEQGRGRH…PGPQHDAAQR (114 aa)). The residue at position 42 (Ser42) is a Phosphoserine. A compositionally biased stretch (polar residues) spans 55–65 (GPSSSGEQTPM). EF-hand domains lie at 133–168 (EELD…LGYM), 187–204 (GRVD…KLRE), 210–245 (LGLR…LLGE), and 247–279 (LVGP…LSRH). 5 residues coordinate Ca(2+): Asp146, Asp148, Asp150, Tyr152, and Asp157. Ca(2+)-binding residues include Asp223, Asp225, Asp227, Arg229, Glu234, Asp260, Asn262, Asp264, Thr266, and Glu271.

As to quaternary structure, interacts with CACNA1F and CACNA1D (via IQ domain) in a calcium independent manner. Interacts (via N-terminus) with UNC119. Post-translationally, phosphorylated. Phosphorylation levels change with the light conditions and regulate the activity. As to expression, expressed in the retina.

It localises to the cytoplasm. The protein resides in the presynapse. Its function is as follows. May play a role in normal synaptic function, probably through regulation of Ca(2+) influx and neurotransmitter release in photoreceptor synaptic terminals and in auditory transmission. Modulator of CACNA1F, shifting the activation range to more hyperpolarized voltages. The chain is Calcium-binding protein 4 (CABP4) from Bos taurus (Bovine).